A 528-amino-acid chain; its full sequence is GMP synthase [glutamine-hydrolyzing] (528 aa).

Residues 3 to 199 (KVAIIDFGSQ…FLDIAGCQKD (197 aa)) form the Glutamine amidotransferase type-1 domain. Catalysis depends on cysteine 83, which acts as the Nucleophile. Residues histidine 174 and glutamate 176 contribute to the active site. The GMPS ATP-PPase domain maps to 200–394 (WTVTSFIDDQ…LGISTEILMR (195 aa)). Residue 227-233 (SGGVDSS) coordinates ATP.

Homodimer.

It carries out the reaction XMP + L-glutamine + ATP + H2O = GMP + L-glutamate + AMP + diphosphate + 2 H(+). It functions in the pathway purine metabolism; GMP biosynthesis; GMP from XMP (L-Gln route): step 1/1. Functionally, catalyzes the synthesis of GMP from XMP. The polypeptide is GMP synthase [glutamine-hydrolyzing] (Ehrlichia ruminantium (strain Welgevonden)).